A 660-amino-acid chain; its full sequence is Bifunctional polymyxin resistance protein ArnA (660 aa).

Positions 1–304 (MKTVVFAYHD…TLGLVQGSRL (304 aa)) are formyltransferase ArnAFT. Residue 86-88 (HLI) coordinates (6R)-10-formyltetrahydrofolate. Histidine 104 (proton donor; for formyltransferase activity) is an active-site residue. (6R)-10-formyltetrahydrofolate-binding positions include arginine 114 and 136–140 (VKRAD). A dehydrogenase ArnADH region spans residues 314–660 (RRTRVLILGV…RTVDLTDKPS (347 aa)). Residues aspartate 347 and 368-369 (DI) contribute to the NAD(+) site. Residues alanine 393, tyrosine 398, and 432-433 (TS) each bind UDP-alpha-D-glucuronate. Glutamate 434 acts as the Proton acceptor; for decarboxylase activity in catalysis. Residues arginine 460, asparagine 492, 526–535 (KLIDGGKQKR), and tyrosine 613 contribute to the UDP-alpha-D-glucuronate site. The active-site Proton donor; for decarboxylase activity is arginine 619.

In the N-terminal section; belongs to the Fmt family. UDP-L-Ara4N formyltransferase subfamily. The protein in the C-terminal section; belongs to the NAD(P)-dependent epimerase/dehydratase family. UDP-glucuronic acid decarboxylase subfamily. In terms of assembly, homohexamer, formed by a dimer of trimers.

It catalyses the reaction UDP-alpha-D-glucuronate + NAD(+) = UDP-beta-L-threo-pentopyranos-4-ulose + CO2 + NADH. The enzyme catalyses UDP-4-amino-4-deoxy-beta-L-arabinose + (6R)-10-formyltetrahydrofolate = UDP-4-deoxy-4-formamido-beta-L-arabinose + (6S)-5,6,7,8-tetrahydrofolate + H(+). It functions in the pathway nucleotide-sugar biosynthesis; UDP-4-deoxy-4-formamido-beta-L-arabinose biosynthesis; UDP-4-deoxy-4-formamido-beta-L-arabinose from UDP-alpha-D-glucuronate: step 1/3. Its pathway is nucleotide-sugar biosynthesis; UDP-4-deoxy-4-formamido-beta-L-arabinose biosynthesis; UDP-4-deoxy-4-formamido-beta-L-arabinose from UDP-alpha-D-glucuronate: step 3/3. The protein operates within bacterial outer membrane biogenesis; lipopolysaccharide biosynthesis. In terms of biological role, bifunctional enzyme that catalyzes the oxidative decarboxylation of UDP-glucuronic acid (UDP-GlcUA) to UDP-4-keto-arabinose (UDP-Ara4O) and the addition of a formyl group to UDP-4-amino-4-deoxy-L-arabinose (UDP-L-Ara4N) to form UDP-L-4-formamido-arabinose (UDP-L-Ara4FN). The modified arabinose is attached to lipid A and is required for resistance to polymyxin and cationic antimicrobial peptides. In Escherichia coli O6:H1 (strain CFT073 / ATCC 700928 / UPEC), this protein is Bifunctional polymyxin resistance protein ArnA.